Consider the following 228-residue polypeptide: MTNAMKIIEMLRIIDNRAKFMGIKLTMMKNLLEKYKDNKELLKEVLKLTEGTRLHELILEAYPPLEELKKEIREEEHKIKITSESGGEEKKEFCTFEGPVSLIAYIKEYLRKYYLGNNVKRIFYDIGKDYAIKLGINTYDDMITFMKKDFGEVVIEKSEPLTVVVKDNKECKNCKASEPICYLTAGFIAGCLENMTNKTYIVEVTEEKCQAVGDPYCTFVAKKSIRLD.

This is an uncharacterized protein from Methanocaldococcus jannaschii (strain ATCC 43067 / DSM 2661 / JAL-1 / JCM 10045 / NBRC 100440) (Methanococcus jannaschii).